We begin with the raw amino-acid sequence, 99 residues long: C-C motif chemokine 8 (99 aa).

The first 23 residues, 1–23 (MKVSAGILCLLLVAATFGTQVLA), serve as a signal peptide directing secretion. A Pyrrolidone carboxylic acid modification is found at Q24. Cystine bridges form between C34–C59 and C35–C75.

This sequence belongs to the intercrine beta (chemokine CC) family. In terms of assembly, monomer or homodimer; in equilibrium.

It is found in the secreted. Its function is as follows. Chemotactic factor that attracts monocytes. This protein can bind heparin. The protein is C-C motif chemokine 8 (CCL8) of Bos taurus (Bovine).